A 344-amino-acid chain; its full sequence is Thioredoxin domain-containing protein 15 (344 aa).

The N-terminal stretch at 1 to 20 is a signal peptide; it reads MQLLCWWQVLLWVLGLPAHG. Topologically, residues 21-305 are extracellular; the sequence is LEVAEDSGHP…GPLPSTLIKT (285 aa). Disordered regions lie at residues 55–119 and 136–156; these read DHRD…FGLQ and GVTEAEPVATEDANSTDSLKS. The segment covering 88–97 has biased composition (basic and acidic residues); the sequence is EDQRSPEAHD. The Thioredoxin domain maps to 163 to 280; sequence ERNVTGLENF…LKIFIFNQTG (118 aa). N-linked (GlcNAc...) asparagine glycosylation is found at Asn-171, Asn-178, Asn-190, and Asn-277. A helical membrane pass occupies residues 306–326; that stretch reads VDWLLVFSLFFLISFIMYATI. Residues 327–344 are Cytoplasmic-facing; the sequence is RTESIRWLIPGQEQEHAE.

It localises to the cell projection. Its subcellular location is the cilium membrane. In terms of biological role, acts as a positive regulator of ciliary hedgehog signaling. Required for cilia biogenesis. This chain is Thioredoxin domain-containing protein 15 (Txndc15), found in Mus musculus (Mouse).